Consider the following 694-residue polypeptide: Polyribonucleotide nucleotidyltransferase (694 aa).

Mg(2+) is bound by residues Asp-485 and Asp-491. The KH domain maps to 552–611 (PRIETMQIKPNKIATVIGPGGKQIRQIIEEAGVQIDINDSGLVSISASSPQAIEKAKSMI). Positions 621–689 (GKIYEGRVTS…EKGQYKLSHK (69 aa)) constitute an S1 motif domain.

This sequence belongs to the polyribonucleotide nucleotidyltransferase family. Mg(2+) serves as cofactor.

It localises to the cytoplasm. The enzyme catalyses RNA(n+1) + phosphate = RNA(n) + a ribonucleoside 5'-diphosphate. Functionally, involved in mRNA degradation. Catalyzes the phosphorolysis of single-stranded polyribonucleotides processively in the 3'- to 5'-direction. The polypeptide is Polyribonucleotide nucleotidyltransferase (Chlamydia caviae (strain ATCC VR-813 / DSM 19441 / 03DC25 / GPIC) (Chlamydophila caviae)).